Reading from the N-terminus, the 193-residue chain is dTTP/UTP pyrophosphatase (193 aa).

Catalysis depends on D71, which acts as the Proton acceptor.

Belongs to the Maf family. YhdE subfamily. A divalent metal cation serves as cofactor.

It localises to the cytoplasm. It catalyses the reaction dTTP + H2O = dTMP + diphosphate + H(+). The enzyme catalyses UTP + H2O = UMP + diphosphate + H(+). Nucleoside triphosphate pyrophosphatase that hydrolyzes dTTP and UTP. May have a dual role in cell division arrest and in preventing the incorporation of modified nucleotides into cellular nucleic acids. The polypeptide is dTTP/UTP pyrophosphatase (Dictyoglomus thermophilum (strain ATCC 35947 / DSM 3960 / H-6-12)).